We begin with the raw amino-acid sequence, 126 residues long: Small ribosomal subunit protein eS6 (126 aa).

This sequence belongs to the eukaryotic ribosomal protein eS6 family.

The sequence is that of Small ribosomal subunit protein eS6 from Nanoarchaeum equitans (strain Kin4-M).